The chain runs to 129 residues: MDHDPHSLGRQGELLAAEYLAGKGYRIIVRNYRHRRNEIDIIAFDGRTLCFIEVKTRGSLEKGHPVESVTPQKQKEIIKAARSYLLTLENREPDCRFDVIAILADAMDNDRIRSFTIEHFIDAFWEETG.

It belongs to the UPF0102 family.

The chain is UPF0102 protein Clim_0016 from Chlorobium limicola (strain DSM 245 / NBRC 103803 / 6330).